A 300-amino-acid polypeptide reads, in one-letter code: (R)-3-hydroxydecanoyl-ACP:CoA transacylase (300 aa).

The AB hydrolase-1 domain occupies 29–253; that stretch reads TIILVNGSLS…HTIRNAGHFI (225 aa).

The protein operates within polyester biosynthesis; polyhydroxyalkanoate biosynthesis. Functionally, catalyzes the transfer of the acyl moiety from in vitro synthesized 3-hydroxydecanoyl-CoA to acyl carrier protein. The protein is (R)-3-hydroxydecanoyl-ACP:CoA transacylase (phaG) of Pseudomonas aeruginosa (strain ATCC 15692 / DSM 22644 / CIP 104116 / JCM 14847 / LMG 12228 / 1C / PRS 101 / PAO1).